The primary structure comprises 183 residues: Orotate phosphoribosyltransferase (183 aa).

Residues R21, K88, and 112–120 (EDVVTTGES) contribute to the 5-phospho-alpha-D-ribose 1-diphosphate site. The orotate site is built by T116 and R144.

The protein belongs to the purine/pyrimidine phosphoribosyltransferase family. PyrE subfamily. Homodimer. Mg(2+) is required as a cofactor.

It carries out the reaction orotidine 5'-phosphate + diphosphate = orotate + 5-phospho-alpha-D-ribose 1-diphosphate. It functions in the pathway pyrimidine metabolism; UMP biosynthesis via de novo pathway; UMP from orotate: step 1/2. In terms of biological role, catalyzes the transfer of a ribosyl phosphate group from 5-phosphoribose 1-diphosphate to orotate, leading to the formation of orotidine monophosphate (OMP). In Thermus thermophilus (strain ATCC BAA-163 / DSM 7039 / HB27), this protein is Orotate phosphoribosyltransferase.